The following is a 435-amino-acid chain: Arginine biosynthesis bifunctional protein ArgJ, mitochondrial (435 aa).

Thr167, Lys193, Thr204, Glu291, Asn430, and Thr435 together coordinate substrate. Residue Thr204 is the Nucleophile of the active site.

It belongs to the ArgJ family. In terms of assembly, heterodimer of an alpha and a beta chain. In terms of processing, the alpha and beta chains are autoproteolytically processed from a single precursor protein within the mitochondrion.

The protein localises to the mitochondrion matrix. It carries out the reaction N(2)-acetyl-L-ornithine + L-glutamate = N-acetyl-L-glutamate + L-ornithine. The catalysed reaction is L-glutamate + acetyl-CoA = N-acetyl-L-glutamate + CoA + H(+). It functions in the pathway amino-acid biosynthesis; L-arginine biosynthesis; L-ornithine and N-acetyl-L-glutamate from L-glutamate and N(2)-acetyl-L-ornithine (cyclic): step 1/1. It participates in amino-acid biosynthesis; L-arginine biosynthesis; N(2)-acetyl-L-ornithine from L-glutamate: step 1/4. Catalyzes two activities which are involved in the cyclic version of arginine biosynthesis: the synthesis of acetylglutamate from glutamate and acetyl-CoA, and of ornithine by transacetylation between acetylornithine and glutamate. The polypeptide is Arginine biosynthesis bifunctional protein ArgJ, mitochondrial (Heterostelium pallidum (strain ATCC 26659 / Pp 5 / PN500) (Cellular slime mold)).